The sequence spans 504 residues: Dihydrolipoamide dehydrogenase (504 aa).

Residues 1–34 constitute a mitochondrion transit peptide; that stretch reads MLSQRLIGRTAVKSAFRPSGLPTVVNASRWRRGY. Residues 69–78, lysine 87, glycine 151, and 180–182 each bind FAD; these read EKRGTLGGTC and TGS. The cysteines at positions 78 and 83 are disulfide-linked. NAD(+) is bound by residues 217-224, glutamate 240, valine 275, and glycine 310; that span reads GGGIIGLE. FAD-binding positions include aspartate 351 and 357 to 360; that span reads MLAH. The Proton acceptor role is filled by histidine 483.

Belongs to the class-I pyridine nucleotide-disulfide oxidoreductase family. In terms of assembly, eukaryotic pyruvate dehydrogenase (PDH) complexes are organized as a core consisting of the oligomeric dihydrolipoamide acetyl-transferase (E2), around which are arranged multiple copies of pyruvate dehydrogenase (E1), dihydrolipoamide dehydrogenase (E3) and protein X (E3BP) bound by non-covalent bonds. The Chaetomium thermophilum PDH complex contains 60 E2 units, 12 E3BP units, about 20 E1 units, and 12 or more E3 units. The units are organized in 1 E2 60-mer, 4 E3BP trimers, about 20 E1 tetramers, and a maximum of 12 E3 dimers. The E3BP trimers are bound inside the icosahedral core with tetrahedral symmetry. It depends on FAD as a cofactor.

Its subcellular location is the mitochondrion. It catalyses the reaction N(6)-[(R)-dihydrolipoyl]-L-lysyl-[protein] + NAD(+) = N(6)-[(R)-lipoyl]-L-lysyl-[protein] + NADH + H(+). In terms of biological role, lipoamide dehydrogenase is a component of the alpha-ketoacid dehydrogenase complexes. This includes the pyruvate dehydrogenase complex, which catalyzes the overall conversion of pyruvate to acetyl-CoA and CO(2). Also acts as a component of the glycine cleavage system (glycine decarboxylase complex), which catalyzes the degradation of glycine. The 10-megadalton pyruvate dehydrogenase complex contains multiple copies of three enzymatic components: pyruvate dehydrogenase (E1), dihydrolipoamide acetyltransferase (E2) and lipoamide dehydrogenase (E3) and catalyzes the overall oxidative decarboxylation of pyruvate to form acetyl-CoA and CO(2). Within the complex, pyruvate and thiamine pyrophosphate (TPP or vitamin B1) are bound by pyruvate dehydrogenase E1 subunits alpha and beta and pyruvate is decarboxylated leading to the 2-carbon hydrohyethyl bound to TPP. The E2 component contains covalently-bound lipoyl cofactors and transfers the hydroxyethyl group from TPP to an oxidized form of covalently bound lipoamide, and the resulting acetyl group is then transferred to free coenzyme A to form acetyl-CoA and reduced dihydrolipoamide-E2. Finally, the flavoprotein dihydrolipoamide dehydrogenase (E3) re-oxidizes the lipoyl group of dihydrolipoamide-E2 to form lipoamide-E2 and NADH. A fourth subunit, E3BP, is responsible for tethering E3 in proximity to the core, forming the entire metabolon. The sequence is that of Dihydrolipoamide dehydrogenase from Chaetomium thermophilum (strain DSM 1495 / CBS 144.50 / IMI 039719) (Thermochaetoides thermophila).